A 192-amino-acid chain; its full sequence is Ion-translocating oxidoreductase complex subunit A (192 aa).

A run of 6 helical transmembrane segments spans residues 5–25, 39–59, 63–83, 102–122, 134–154, and 171–191; these read ILLIIGTALINNFVLVKFLGL, VGMGLATMFVLTVASLCAYLV, ILIPLNATFLRTLVFILVIAV, LLGIFLPLITTNCAVLGVALL, VVYGFGASLGFSLVLVLFAAL, and AIALITAGLMSLAFMGFTGLV.

This sequence belongs to the NqrDE/RnfAE family. As to quaternary structure, the complex is composed of six subunits: RnfA, RnfB, RnfC, RnfD, RnfE and RnfG.

The protein localises to the cell inner membrane. Functionally, part of a membrane-bound complex that couples electron transfer with translocation of ions across the membrane. This chain is Ion-translocating oxidoreductase complex subunit A, found in Haemophilus influenzae (strain 86-028NP).